Here is a 430-residue protein sequence, read N- to C-terminus: Purine nucleoside phosphorylase LACC1 (430 aa).

Lys-247 is subject to N6-acetyllysine. Residues His-250, Cys-284, and His-301 each contribute to the Zn(2+) site.

Belongs to the purine nucleoside phosphorylase YfiH/LACC1 family. In terms of assembly, interacts with FASN. Interacts with SDHA. Interacts with ATF6, EIF2AK3 and ERN1. Phosphorylated on tyrosine residues. Predominantly expressed in myeloid cells. Highly expressed in primary macrophages and dendritic cells sorted from the peritoneum or spleen, respectively (at protein level).

It localises to the cytoplasm. The protein resides in the nucleus. Its subcellular location is the endoplasmic reticulum. It is found in the peroxisome. The catalysed reaction is adenosine + phosphate = alpha-D-ribose 1-phosphate + adenine. It catalyses the reaction inosine + phosphate = alpha-D-ribose 1-phosphate + hypoxanthine. The enzyme catalyses guanosine + phosphate = alpha-D-ribose 1-phosphate + guanine. It carries out the reaction S-methyl-5'-thioadenosine + phosphate = 5-(methylsulfanyl)-alpha-D-ribose 1-phosphate + adenine. The catalysed reaction is adenosine + H2O + H(+) = inosine + NH4(+). Functionally, purine nucleoside enzyme that catalyzes the phosphorolysis of adenosine, guanosine and inosine nucleosides, yielding D-ribose 1-phosphate and the respective free bases, adenine, guanine and hypoxanthine. Also catalyzes the phosphorolysis of S-methyl-5'-thioadenosine into adenine and S-methyl-5-thio-alpha-D-ribose 1-phosphate. Also has adenosine deaminase activity. Acts as a regulator of innate immunity in macrophages by modulating the purine nucleotide metabolism, thereby regulating the metabolic function and bioenergetic state of macrophages. Enables a purine nucleotide cycle between adenosine and inosine monophosphate and adenylosuccinate that prevents cytoplasmic acidification and balances the cytoplasmic-mitochondrial redox interface. The purine nucleotide cycle consumes aspartate and releases fumarate in a manner involving fatty acid oxidation and ATP-citrate lyase activity. Participates in pattern recognition receptor-induced cytokines in macrophages: associates with the NOD2-signaling complex and promotes optimal NOD2-induced signaling, cytokine secretion and bacterial clearance. Localizes to the endoplasmic reticulum upon PRR stimulation of macrophages and associates with endoplasmic reticulum-stress sensors, promoting the endoplasmic reticulum unfolded protein response (UPR). Does not show laccase activity. This chain is Purine nucleoside phosphorylase LACC1, found in Mus musculus (Mouse).